A 175-amino-acid polypeptide reads, in one-letter code: Cytochrome c homolog (175 aa).

Residues 1-8 are Cytoplasmic-facing; that stretch reads MSGKELNK. The chain crosses the membrane as a helical; Signal-anchor span at residues 9 to 29; that stretch reads IVAAILFASLIAMMVGFVANI. The Periplasmic segment spans residues 30-175; it reads LYKPTLELQH…LFLKTYVHDK (146 aa). Heme c-binding residues include Cys-84, Cys-87, His-88, and Met-150.

Belongs to the cytochrome c family. In terms of processing, binds 1 heme c group covalently per subunit.

It localises to the cell membrane. In terms of biological role, may be involved in electron transfer from bc1 complex to aa3. In Rickettsia felis (strain ATCC VR-1525 / URRWXCal2) (Rickettsia azadi), this protein is Cytochrome c homolog (cycM).